An 805-amino-acid chain; its full sequence is Zinc finger X-chromosomal protein (805 aa).

Ser-274 carries the post-translational modification Phosphoserine. C2H2-type zinc fingers lie at residues 425-447 (YPCMICGKKFKSRGFLKRHMKNH), 456-478 (YRCTDCDYTTNKKISLHNHLESH), 488-510 (IECDECGKHFSHAGALFTHKMVH), 519-542 (HKCKFCEYETAEQGLLNRHLLAVH), 548-570 (HICVECGKGFRHPSELKKHMRIH), 576-599 (YQCQYCEYRSADSSNLKTHVKTKH), 605-627 (FKCDICLLTFSDTKEVQQHALIH), 633-656 (HQCLHCDHKSSNSSDLKRHIISVH), 662-684 (HKCDMCDKGFHRPSELKKHVAAH), 690-713 (HQCRHCDFKIADPFVLSRHILSVH), 719-741 (FRCKRCRKGFRQQSELKKHMKTH), 747-770 (YQCEYCEYSTTDASGFKRHVISIH), and 776-798 (HRCEYCKKGFRRPSEKNQHIMRH).

This sequence belongs to the krueppel C2H2-type zinc-finger protein family. ZFX/ZFY subfamily.

The protein localises to the nucleus. In terms of biological role, probable transcriptional activator. The polypeptide is Zinc finger X-chromosomal protein (ZFX) (Homo sapiens (Human)).